A 210-amino-acid chain; its full sequence is Chaperone protein TorD (210 aa).

It belongs to the TorD/DmsD family. TorD subfamily.

The protein localises to the cytoplasm. Functionally, involved in the biogenesis of TorA. Acts on TorA before the insertion of the molybdenum cofactor and, as a result, probably favors a conformation of the apoenzyme that is competent for acquiring the cofactor. The sequence is that of Chaperone protein TorD from Salmonella paratyphi B (strain ATCC BAA-1250 / SPB7).